We begin with the raw amino-acid sequence, 1052 residues long: Mediator of RNA polymerase II transcription subunit 5 (1052 aa).

The tract at residues 949–982 (GGDDEQREQHQQQQPDADQSNQGVVAPTGNTPGN) is disordered. A compositionally biased stretch (low complexity) spans 959–970 (QQQQPDADQSNQ).

It belongs to the Mediator complex subunit 5 family. As to quaternary structure, component of the Mediator complex.

The protein localises to the nucleus. In terms of biological role, component of the Mediator complex, a coactivator involved in the regulated transcription of nearly all RNA polymerase II-dependent genes. Mediator functions as a bridge to convey information from gene-specific regulatory proteins to the basal RNA polymerase II transcription machinery. Mediator is recruited to promoters by direct interactions with regulatory proteins and serves as a scaffold for the assembly of a functional preinitiation complex with RNA polymerase II and the general transcription factors. The polypeptide is Mediator of RNA polymerase II transcription subunit 5 (NUT1) (Coccidioides immitis (strain RS) (Valley fever fungus)).